The primary structure comprises 1092 residues: Myelin regulatory factor (1092 aa).

The Cytoplasmic portion of the chain corresponds to 1–730; that stretch reads MDVEDENETL…CVSQRFLQAT (730 aa). Disordered stretches follow at residues 145-168, 187-210, and 258-282; these read SYAA…PQQL, PPSR…SIHQ, and QQHG…TNTL. Residues 196–205 are compositionally biased toward pro residues; that stretch reads PPHLQGPLPP. The segment at residues 246-507 is a DNA-binding region (NDT80); the sequence is AQQSQMLHQL…SNPGQFESDS (262 aa). Positions 553–662 constitute a Peptidase S74 domain; it reads SDIRAKESVE…KLTDNLETRI (110 aa). Residues 646 to 677 adopt a coiled-coil conformation; the sequence is GAVKELCKLTDNLETRIDELERWSHKLAKLRR. The segment covering 681 to 695 has biased composition (polar residues); sequence MKSTNSHTGSSQFSR. The interval 681–714 is disordered; the sequence is MKSTNSHTGSSQFSRAGSVPYKQRPPKVMGKTVP. Residues 731–751 traverse the membrane as a helical segment; sequence IIALVIIMAFSVISMTTLYVL. Residues 752–1092 lie on the Lumenal side of the membrane; sequence NLRSEDDMLG…YYFRFYRLCD (341 aa). Disordered stretches follow at residues 798–817 and 849–945; these read TTQL…SPDW and ITRK…DSRY. Polar residues-rich tracts occupy residues 849–867 and 928–945; these read ITRK…TDPA and TPIT…DSRY. Residues N941, N961, N974, and N996 are each glycosylated (N-linked (GlcNAc...) asparagine).

It belongs to the MRF family. In terms of assembly, homotrimer. Post-translationally, follows autocatalytic cleavage via the peptidase S74 domain. Autoprocessing is apparently constitutive and is essential for transcriptional activity.

It is found in the endoplasmic reticulum membrane. It localises to the nucleus. The protein localises to the cytoplasm. Constitutes a precursor of the transcription factor. Mediates the autocatalytic cleavage that releases the Myelin regulatory factor, N-terminal component that specifically activates transcription of central nervous system (CNS) myelin genes. Its function is as follows. Membrane-bound part that has no transcription factor activity and remains attached to the endoplasmic reticulum membrane following cleavage. Functionally, transcription factor that specifically activates expression of myelin genes during oligodendrocyte (OL) maturation, thereby playing a central role in oligodendrocyte maturation and CNS myelination. This is Myelin regulatory factor (myrf) from Xenopus laevis (African clawed frog).